The sequence spans 453 residues: Bifunctional protein GlmU (453 aa).

The interval 1 to 225 is pyrophosphorylase; sequence MNIVILAAGT…EWETLGVNSK (225 aa). UDP-N-acetyl-alpha-D-glucosamine contacts are provided by residues 6-9, Lys20, Gln71, 76-77, 98-100, Gly135, Glu150, Asn165, and Asn223; these read LAAG, GT, and YGD. Asp100 contributes to the Mg(2+) binding site. A Mg(2+)-binding site is contributed by Asn223. The interval 226-246 is linker; that stretch reads AQLAELERIHQRNVADALLVD. The tract at residues 247 to 453 is N-acetyltransferase; that stretch reads GVTLADPARV…GYVRPVKKKS (207 aa). Residues Arg329 and Lys347 each contribute to the UDP-N-acetyl-alpha-D-glucosamine site. His359 functions as the Proton acceptor in the catalytic mechanism. 2 residues coordinate UDP-N-acetyl-alpha-D-glucosamine: Tyr362 and Asn373. Residues Ala376, 382 to 383, Ser401, and Ala419 each bind acetyl-CoA; that span reads NY.

It in the N-terminal section; belongs to the N-acetylglucosamine-1-phosphate uridyltransferase family. This sequence in the C-terminal section; belongs to the transferase hexapeptide repeat family. As to quaternary structure, homotrimer. Requires Mg(2+) as cofactor.

It is found in the cytoplasm. It catalyses the reaction alpha-D-glucosamine 1-phosphate + acetyl-CoA = N-acetyl-alpha-D-glucosamine 1-phosphate + CoA + H(+). The enzyme catalyses N-acetyl-alpha-D-glucosamine 1-phosphate + UTP + H(+) = UDP-N-acetyl-alpha-D-glucosamine + diphosphate. It participates in nucleotide-sugar biosynthesis; UDP-N-acetyl-alpha-D-glucosamine biosynthesis; N-acetyl-alpha-D-glucosamine 1-phosphate from alpha-D-glucosamine 6-phosphate (route II): step 2/2. Its pathway is nucleotide-sugar biosynthesis; UDP-N-acetyl-alpha-D-glucosamine biosynthesis; UDP-N-acetyl-alpha-D-glucosamine from N-acetyl-alpha-D-glucosamine 1-phosphate: step 1/1. It functions in the pathway bacterial outer membrane biogenesis; LPS lipid A biosynthesis. Functionally, catalyzes the last two sequential reactions in the de novo biosynthetic pathway for UDP-N-acetylglucosamine (UDP-GlcNAc). The C-terminal domain catalyzes the transfer of acetyl group from acetyl coenzyme A to glucosamine-1-phosphate (GlcN-1-P) to produce N-acetylglucosamine-1-phosphate (GlcNAc-1-P), which is converted into UDP-GlcNAc by the transfer of uridine 5-monophosphate (from uridine 5-triphosphate), a reaction catalyzed by the N-terminal domain. This is Bifunctional protein GlmU from Burkholderia orbicola (strain AU 1054).